The sequence spans 741 residues: Nuclear pore complex protein Nup88 (741 aa).

Ala-2 carries the N-acetylalanine modification. Residues Ser-35, Ser-50, Ser-379, Ser-437, Ser-442, and Ser-517 each carry the phosphoserine modification. Position 525 is a phosphothreonine (Thr-525). Ser-540 carries the post-translational modification Phosphoserine. Positions 585–651 form a coiled coil; sequence EEIQRRVKLL…KLLHSFHSEL (67 aa). Ser-698 carries the phosphoserine modification.

As to quaternary structure, interacts with NUP214/CAN. Interacts with NUP62 and NUP98. Ubiquitous.

The protein resides in the nucleus. Its subcellular location is the nuclear pore complex. Functionally, component of nuclear pore complex. The protein is Nuclear pore complex protein Nup88 (NUP88) of Homo sapiens (Human).